A 575-amino-acid polypeptide reads, in one-letter code: Dihydroxy-acid dehydratase (575 aa).

The interval 1–27 is disordered; the sequence is MSNQERQERPEKDPDLRSTEVTEGYEK. Cysteine 61 contacts [2Fe-2S] cluster. A Mg(2+)-binding site is contributed by aspartate 93. Cysteine 134 provides a ligand contact to [2Fe-2S] cluster. Residues aspartate 135 and lysine 136 each contribute to the Mg(2+) site. Lysine 136 carries the post-translational modification N6-carboxylysine. Cysteine 206 provides a ligand contact to [2Fe-2S] cluster. Glutamate 460 lines the Mg(2+) pocket. Serine 486 serves as the catalytic Proton acceptor.

Belongs to the IlvD/Edd family. As to quaternary structure, homodimer. The cofactor is [2Fe-2S] cluster. Mg(2+) is required as a cofactor.

The catalysed reaction is (2R)-2,3-dihydroxy-3-methylbutanoate = 3-methyl-2-oxobutanoate + H2O. The enzyme catalyses (2R,3R)-2,3-dihydroxy-3-methylpentanoate = (S)-3-methyl-2-oxopentanoate + H2O. It participates in amino-acid biosynthesis; L-isoleucine biosynthesis; L-isoleucine from 2-oxobutanoate: step 3/4. It functions in the pathway amino-acid biosynthesis; L-valine biosynthesis; L-valine from pyruvate: step 3/4. Functions in the biosynthesis of branched-chain amino acids. Catalyzes the dehydration of (2R,3R)-2,3-dihydroxy-3-methylpentanoate (2,3-dihydroxy-3-methylvalerate) into 2-oxo-3-methylpentanoate (2-oxo-3-methylvalerate) and of (2R)-2,3-dihydroxy-3-methylbutanoate (2,3-dihydroxyisovalerate) into 2-oxo-3-methylbutanoate (2-oxoisovalerate), the penultimate precursor to L-isoleucine and L-valine, respectively. The chain is Dihydroxy-acid dehydratase from Haloarcula marismortui (strain ATCC 43049 / DSM 3752 / JCM 8966 / VKM B-1809) (Halobacterium marismortui).